We begin with the raw amino-acid sequence, 285 residues long: Seed agglutinin 2 (285 aa).

The signal sequence occupies residues Met-1–Ser-31. Asn-147 is a glycosylation site (N-linked (GlcNAc...) asparagine). Mn(2+) is bound by residues Glu-156 and Asp-158. The Ca(2+) site is built by Asp-158, Asn-162, and Asp-166. Residues Asp-166 and His-171 each contribute to the Mn(2+) site.

This sequence belongs to the leguminous lectin family. As to quaternary structure, homotetramer. Post-translationally, mostly found in non-glycosylated form. As to expression, expressed in seed.

Its function is as follows. Seed lectin. This Robinia pseudoacacia (Black locust) protein is Seed agglutinin 2.